We begin with the raw amino-acid sequence, 120 residues long: Putative non-specific lipid-transfer protein 14 (120 aa).

The N-terminal stretch at 1–22 is a signal peptide; sequence MTRSFSPVVSLFLLLLQTICSA. 4 disulfides stabilise this stretch: Cys-30/Cys-80, Cys-40/Cys-57, Cys-58/Cys-102, and Cys-78/Cys-116.

The protein belongs to the plant LTP family.

Functionally, plant non-specific lipid-transfer proteins transfer phospholipids as well as galactolipids across membranes. May play a role in wax or cutin deposition in the cell walls of expanding epidermal cells and certain secretory tissues. The polypeptide is Putative non-specific lipid-transfer protein 14 (LTP14) (Arabidopsis thaliana (Mouse-ear cress)).